Here is a 468-residue protein sequence, read N- to C-terminus: UDP-N-acetylmuramate--L-alanine ligase (468 aa).

114-120 is an ATP binding site; it reads GTHGKTT.

The protein belongs to the MurCDEF family.

Its subcellular location is the cytoplasm. It catalyses the reaction UDP-N-acetyl-alpha-D-muramate + L-alanine + ATP = UDP-N-acetyl-alpha-D-muramoyl-L-alanine + ADP + phosphate + H(+). It functions in the pathway cell wall biogenesis; peptidoglycan biosynthesis. In terms of biological role, cell wall formation. The protein is UDP-N-acetylmuramate--L-alanine ligase of Methylorubrum populi (strain ATCC BAA-705 / NCIMB 13946 / BJ001) (Methylobacterium populi).